The primary structure comprises 146 residues: Zinc metalloproteinase-disintegrin salmosin-3 (146 aa).

Positions 1 to 57 (SCPCDANSCIMSATLSNEPSSRFSDCSFSLPSRFSDCSFNQYSSDIIHYHECLLNEP) constitute a Peptidase M12B domain. 9 disulfide bridges follow: Cys2-Cys37, Cys4-Cys9, Cys68-Cys87, Cys79-Cys97, Cys81-Cys92, Cys91-Cys114, Cys105-Cys111, Cys110-Cys135, and Cys123-Cys142. Positions 65–146 (PPVCGNYYPE…GQSGVCPRNT (82 aa)) constitute a Disintegrin domain. The Cell attachment site motif lies at 127 to 129 (RGD).

The protein belongs to the venom metalloproteinase (M12B) family. P-II subfamily. P-IIb sub-subfamily. Monomer (disintegrin). Requires Zn(2+) as cofactor. In terms of tissue distribution, expressed by the venom gland.

Its subcellular location is the secreted. Snake venom zinc metalloproteinase that inhibits ADP-induced platelet aggregation (probably by binding integrin alpha-IIb/beta-3 (ITGA2B/ITGB3)) and degrades fibrinogen. In Gloydius brevicauda (Korean slamosa snake), this protein is Zinc metalloproteinase-disintegrin salmosin-3.